A 176-amino-acid chain; its full sequence is Nascent polypeptide-associated complex subunit alpha (176 aa).

Positions 14-78 (SKNEKKAREL…AKVDDFTQRL (65 aa)) constitute an NAC-A/B domain. The disordered stretch occupies residues 85-127 (LQQNEGVLPAGQDAVSKDPQSIQADMQAAADSATDKPSADDAV). In terms of domain architecture, UBA spans 137-176 (LNADDIELVMQQAGVPRAKAAKALKEHDSDIVNAIMALSG).

This sequence belongs to the NAC-alpha family. Part of the nascent polypeptide-associated complex (NAC), consisting of EGD2 and EGD1. NAC associates with ribosomes via EGD1.

It localises to the cytoplasm. Its subcellular location is the nucleus. Functionally, component of the nascent polypeptide-associated complex (NAC), a dynamic component of the ribosomal exit tunnel, protecting the emerging polypeptides from interaction with other cytoplasmic proteins to ensure appropriate nascent protein targeting. The NAC complex also promotes mitochondrial protein import by enhancing productive ribosome interactions with the outer mitochondrial membrane and blocks the inappropriate interaction of ribosomes translating non-secretory nascent polypeptides with translocation sites in the membrane of the endoplasmic reticulum. EGD2 may also be involved in transcription regulation. The polypeptide is Nascent polypeptide-associated complex subunit alpha (EGD2) (Kluyveromyces lactis (strain ATCC 8585 / CBS 2359 / DSM 70799 / NBRC 1267 / NRRL Y-1140 / WM37) (Yeast)).